The sequence spans 792 residues: Genome polyprotein (792 aa).

The interaction with host EXOC1 stretch occupies residues 1–15 (MNNQRKKTGNPSFNM). Residues 1–101 (MNNQRKKTGN…LNIMNRRRRS (101 aa)) are Cytoplasmic-facing. The tract at residues 37–72 (LLSGQGPMKLVMAFVAFLRFLAIPPTAGILKRWGSF) is hydrophobic; homodimerization of capsid protein C. A propeptide spans 101-114 (SVTMILMLLPTALA) (ER anchor for the capsid protein C, removed in mature form by serine protease NS3). A helical membrane pass occupies residues 102–119 (VTMILMLLPTALAFHLTT). Residues 120–242 (RGGEPTLIVS…QIQKVETWAL (123 aa)) are Extracellular-facing. The N-linked (GlcNAc...) asparagine; by host glycan is linked to asparagine 183. Residues 243-260 (RHPGFTVIGLFLAHAIGT) form a helical membrane-spanning segment. Residue serine 261 is a topological domain, cytoplasmic. A helical membrane pass occupies residues 262–280 (ITQKGIIFILLMLVTPSMA). Residues 281 to 725 (MRCVGIGNRD…IHQIFGTAYG (445 aa)) lie on the Extracellular side of the membrane. 4 disulfide bridges follow: cysteine 283–cysteine 310, cysteine 340–cysteine 401, cysteine 354–cysteine 385, and cysteine 372–cysteine 396. A glycan (N-linked (GlcNAc...) asparagine; by host) is linked at asparagine 347. The interval 378–391 (DRGWGNGCGLFGKG) is fusion peptide. The N-linked (GlcNAc...) asparagine; by host glycan is linked to asparagine 433. Disulfide bonds link cysteine 465–cysteine 565 and cysteine 582–cysteine 613. A helical transmembrane segment spans residues 726-746 (VLFSGVSWTMKIGIGILLTWL). Residues 747 to 752 (GLNSRS) are Cytoplasmic-facing. A helical transmembrane segment spans residues 753–775 (TSLSMTCIAVGMVTLYLGVMVQA). At 776 to 792 (DSGCVINWKGKELKCGS) the chain is on the extracellular side. Cysteine 779 and cysteine 790 form a disulfide bridge.

In terms of assembly, homodimer. Interacts (via N-terminus) with host EXOC1 (via C-terminus); this interaction results in EXOC1 degradation through the proteasome degradation pathway. As to quaternary structure, forms heterodimers with envelope protein E in the endoplasmic reticulum and Golgi. Homodimer; in the endoplasmic reticulum and Golgi. Interacts with protein prM. Interacts with non-structural protein 1. In terms of assembly, homodimer; Homohexamer when secreted. Interacts with envelope protein E. In terms of processing, specific enzymatic cleavages in vivo yield mature proteins. Cleavages in the lumen of endoplasmic reticulum are performed by host signal peptidase, wereas cleavages in the cytoplasmic side are performed by serine protease NS3. Signal cleavage at the 2K-4B site requires a prior NS3 protease-mediated cleavage at the 4A-2K site. N-glycosylated. Post-translationally, N-glycosylated. The excreted form is glycosylated and this is required for efficient secretion of the protein from infected cells.

Its subcellular location is the virion. It is found in the host nucleus. It localises to the host cytoplasm. The protein resides in the host perinuclear region. The protein localises to the secreted. Its subcellular location is the virion membrane. It is found in the host endoplasmic reticulum membrane. Its function is as follows. Plays a role in virus budding by binding to the cell membrane and gathering the viral RNA into a nucleocapsid that forms the core of a mature virus particle. During virus entry, may induce genome penetration into the host cytoplasm after hemifusion induced by the surface proteins. Can migrate to the cell nucleus where it modulates host functions. Overcomes the anti-viral effects of host EXOC1 by sequestering and degrading the latter through the proteasome degradation pathway. Functionally, inhibits RNA silencing by interfering with host Dicer. Prevents premature fusion activity of envelope proteins in trans-Golgi by binding to envelope protein E at pH6.0. After virion release in extracellular space, gets dissociated from E dimers. In terms of biological role, acts as a chaperone for envelope protein E during intracellular virion assembly by masking and inactivating envelope protein E fusion peptide. prM is the only viral peptide matured by host furin in the trans-Golgi network probably to avoid catastrophic activation of the viral fusion activity in acidic Golgi compartment prior to virion release. prM-E cleavage is inefficient, and many virions are only partially matured. These uncleaved prM would play a role in immune evasion. Its function is as follows. May play a role in virus budding. Exerts cytotoxic effects by activating a mitochondrial apoptotic pathway through M ectodomain. May display a viroporin activity. Functionally, binds to host cell surface receptor and mediates fusion between viral and cellular membranes. Envelope protein is synthesized in the endoplasmic reticulum in the form of heterodimer with protein prM. They play a role in virion budding in the ER, and the newly formed immature particle is covered with 60 spikes composed of heterodimer between precursor prM and envelope protein E. The virion is transported to the Golgi apparatus where the low pH causes dissociation of PrM-E heterodimers and formation of E homodimers. prM-E cleavage is inefficient, and many virions are only partially matured. These uncleaved prM would play a role in immune evasion. Involved in immune evasion, pathogenesis and viral replication. Once cleaved off the polyprotein, is targeted to three destinations: the viral replication cycle, the plasma membrane and the extracellular compartment. Essential for viral replication. Required for formation of the replication complex and recruitment of other non-structural proteins to the ER-derived membrane structures. Excreted as a hexameric lipoparticle that plays a role against host immune response. Antagonizing the complement function. Binds to the host macrophages and dendritic cells. Inhibits signal transduction originating from Toll-like receptor 3 (TLR3). In terms of biological role, disrupts the host endothelial glycocalyx layer of host pulmonary microvascular endothelial cells, inducing degradation of sialic acid and shedding of heparan sulfate proteoglycans. NS1 induces expression of sialidases, heparanase, and activates cathepsin L, which activates heparanase via enzymatic cleavage. These effects are probably linked to the endothelial hyperpermeability observed in severe dengue disease. The protein is Genome polyprotein of Aedes aegypti (Yellowfever mosquito).